Reading from the N-terminus, the 51-residue chain is Large ribosomal subunit protein bL33 (51 aa).

It belongs to the bacterial ribosomal protein bL33 family.

The protein is Large ribosomal subunit protein bL33 of Acidithiobacillus ferrooxidans (strain ATCC 53993 / BNL-5-31) (Leptospirillum ferrooxidans (ATCC 53993)).